Here is a 118-residue protein sequence, read N- to C-terminus: Large ribosomal subunit protein uL24 (118 aa).

Belongs to the universal ribosomal protein uL24 family. As to quaternary structure, part of the 50S ribosomal subunit.

One of two assembly initiator proteins, it binds directly to the 5'-end of the 23S rRNA, where it nucleates assembly of the 50S subunit. Its function is as follows. One of the proteins that surrounds the polypeptide exit tunnel on the outside of the subunit. The sequence is that of Large ribosomal subunit protein uL24 from Prochlorococcus marinus (strain AS9601).